The primary structure comprises 1137 residues: Bone sialoprotein-binding protein (1137 aa).

The N-terminal stretch at 1–52 (MINRDNKKAITKKGMISNRLNKFSIRKYTVGTASILVGTTLIFGLGNQEAKA) is a signal peptide. The ligand binding A region stretch occupies residues 53 to 601 (AENTSTENAK…GDGTVKPEEK (549 aa)). 2 disordered regions span residues 54–249 (ENTS…TAPT) and 675–697 (LPTK…VTVK). The span at 61–75 (AKQDEASASDNKEVV) shows a compositional bias: basic and acidic residues. Polar residues predominate over residues 77 to 89 (ETENNSTQKNDLT). A compositionally biased stretch (basic and acidic residues) spans 92 to 106 (IKKETNTDSHQEAKE). Positions 109-126 (TTSSTQQQQNNATTSTET) are enriched in low complexity. Over residues 130 to 145 (NIEKENVKPSTDKTAT) the composition is skewed to basic and acidic residues. The span at 158-207 (PNNTNNDVTTKPSTSEIQTTPTTPQESTNIENSQPQPTPSKVDNQVTDAT) shows a compositional bias: polar residues. Residues 216 to 241 (SKEELKNNPEKLKELVRNDSNTDRST) show a composition bias toward basic and acidic residues. CNA-B domains follow at residues 602–714 (LYKI…YKEP), 715–824 (KYNL…YKTP), and 825–935 (KYSL…EEDT). A disordered region spans residues 896-1112 (TQTGTNTTED…TGSENNGSNN (217 aa)). 2 stretches are compositionally biased toward acidic residues: residues 903-913 (TEDDKDADGGE) and 930-1076 (YFEE…DSDS). The short motif at 1100 to 1104 (LPETG) is the LPXTG sorting signal element. The residue at position 1103 (Thr1103) is a Pentaglycyl murein peptidoglycan amidated threonine. Residues 1104 to 1137 (GSENNGSNNATLFGGLFAALGSLLLFGRRKKQNK) constitute a propeptide, removed by sortase.

Belongs to the serine-aspartate repeat-containing protein (SDr) family.

The protein resides in the secreted. Its subcellular location is the cell wall. Its function is as follows. Specifically interacts with bone sialoprotein (BSP), a glycoprotein of bone and dentin extracellular matrix. Could contribute to staphylococcal osteomyelitis and arthritis. In Staphylococcus aureus (strain MRSA252), this protein is Bone sialoprotein-binding protein (bbp).